The sequence spans 139 residues: D-ribose pyranase (139 aa).

H20 functions as the Proton donor in the catalytic mechanism. Substrate contacts are provided by residues D28, H106, and 128-130; that span reads YAN.

It belongs to the RbsD / FucU family. RbsD subfamily. In terms of assembly, homodecamer.

It is found in the cytoplasm. It catalyses the reaction beta-D-ribopyranose = beta-D-ribofuranose. It functions in the pathway carbohydrate metabolism; D-ribose degradation; D-ribose 5-phosphate from beta-D-ribopyranose: step 1/2. Catalyzes the interconversion of beta-pyran and beta-furan forms of D-ribose. This is D-ribose pyranase from Proteus mirabilis (strain HI4320).